A 466-amino-acid chain; its full sequence is Chromosomal replication initiator protein DnaA (466 aa).

The segment at 1–86 (MSLSLWQQCL…EVGTKPVTQT (86 aa)) is domain I, interacts with DnaA modulators. The interval 86–129 (TLKTPVHNVVAPTQTTTAQPQRVAPAARSGWDNVPAPAEPTYRS) is domain II. The tract at residues 130–346 (NVNVKHTFDN…GALNRVIANA (217 aa)) is domain III, AAA+ region. ATP contacts are provided by glycine 174, glycine 176, lysine 177, and threonine 178. The interval 347–466 (NFTGRAITID…FSNLIRTLSS (120 aa)) is domain IV, binds dsDNA.

Belongs to the DnaA family. As to quaternary structure, oligomerizes as a right-handed, spiral filament on DNA at oriC.

Its subcellular location is the cytoplasm. Its function is as follows. Plays an essential role in the initiation and regulation of chromosomal replication. ATP-DnaA binds to the origin of replication (oriC) to initiate formation of the DNA replication initiation complex once per cell cycle. Binds the DnaA box (a 9 base pair repeat at the origin) and separates the double-stranded (ds)DNA. Forms a right-handed helical filament on oriC DNA; dsDNA binds to the exterior of the filament while single-stranded (ss)DNA is stabiized in the filament's interior. The ATP-DnaA-oriC complex binds and stabilizes one strand of the AT-rich DNA unwinding element (DUE), permitting loading of DNA polymerase. After initiation quickly degrades to an ADP-DnaA complex that is not apt for DNA replication. Binds acidic phospholipids. The sequence is that of Chromosomal replication initiator protein DnaA from Salmonella enteritidis PT4 (strain P125109).